An 84-amino-acid polypeptide reads, in one-letter code: M-zodatoxin-Lt2b (84 aa).

A signal peptide spans 1-22 (MKYFVIALALAVALVCIAESTA). A propeptide spanning residues 23 to 58 (YEVNEELENELDDLDDAAWLAVAEELQGLEDFEESR) is cleaved from the precursor. The Processing quadruplet motif motif lies at 55 to 58 (EESR).

Cleavage of the propeptide depends on the processing quadruplet motif (XXXR, with at least one of X being E). In terms of tissue distribution, expressed by the venom gland.

Its subcellular location is the secreted. In terms of biological role, has antimicrobial activity against both Gram-positive and Gram-negative bacteria, and yeasts. Also has a strong hemolytic activity against rabbit erythrocytes. Causes paralysis, but is not lethal when injected into insect (M.domestica) larvae. This chain is M-zodatoxin-Lt2b, found in Lachesana tarabaevi (Spider).